The chain runs to 447 residues: Methylenetetrahydrofolate--tRNA-(uracil-5-)-methyltransferase TrmFO (447 aa).

10 to 15 (GAGLAG) lines the FAD pocket.

The protein belongs to the MnmG family. TrmFO subfamily. The cofactor is FAD.

Its subcellular location is the cytoplasm. It carries out the reaction uridine(54) in tRNA + (6R)-5,10-methylene-5,6,7,8-tetrahydrofolate + NADH + H(+) = 5-methyluridine(54) in tRNA + (6S)-5,6,7,8-tetrahydrofolate + NAD(+). It catalyses the reaction uridine(54) in tRNA + (6R)-5,10-methylene-5,6,7,8-tetrahydrofolate + NADPH + H(+) = 5-methyluridine(54) in tRNA + (6S)-5,6,7,8-tetrahydrofolate + NADP(+). Functionally, catalyzes the folate-dependent formation of 5-methyl-uridine at position 54 (M-5-U54) in all tRNAs. The sequence is that of Methylenetetrahydrofolate--tRNA-(uracil-5-)-methyltransferase TrmFO from Symbiobacterium thermophilum (strain DSM 24528 / JCM 14929 / IAM 14863 / T).